A 244-amino-acid chain; its full sequence is MKRFAIEFAYDGTKFFGYQGQPNVRTVQGDLEDALERIFKERIYTQAAGRTDAGVHANGQVAAFNCPIERLTETDIKNALNANLPDDIYVKKAWVVDKSFNPRFAATKRIYHYFISTNEKDVFMRNYVWNFRYDLDIEAMRKAASFLEGEHDFSSFKKGKDEKNPVRTIYRIRILTLKKGLILIRVEGRSFLRSMVRNIVGSLVRVGLGQWKPEKILEVLEKRSRQEAAGTAPPHGLYLYKVLF.

Catalysis depends on aspartate 52, which acts as the Nucleophile. Residue tyrosine 111 participates in substrate binding.

Belongs to the tRNA pseudouridine synthase TruA family. In terms of assembly, homodimer.

It carries out the reaction uridine(38/39/40) in tRNA = pseudouridine(38/39/40) in tRNA. Functionally, formation of pseudouridine at positions 38, 39 and 40 in the anticodon stem and loop of transfer RNAs. This is tRNA pseudouridine synthase A from Thermosipho africanus (strain TCF52B).